A 3843-amino-acid polypeptide reads, in one-letter code: NBPF family member NBPF19 (3843 aa).

A coiled-coil region spans residues 70–130; the sequence is MLRNERQFKE…RSLNEHLQAL (61 aa). 45 Olduvai domains span residues 165-257, 258-329, 330-421, 424-479, 480-572, 573-665, 668-723, 724-816, 817-909, 912-967, 968-1060, 1061-1153, 1156-1211, 1212-1304, 1305-1397, 1400-1455, 1456-1548, 1549-1641, 1644-1699, 1700-1792, 1793-1885, 1888-1943, 1944-2036, 2037-2129, 2132-2187, 2188-2280, 2281-2373, 2376-2431, 2432-2524, 2525-2617, 2620-2675, 2676-2768, 2769-2861, 2864-2919, 2920-3012, 3013-3105, 3108-3163, 3164-3256, 3257-3349, 3352-3407, 3408-3500, 3501-3593, 3596-3651, 3652-3744, and 3745-3843; these read ENDN…HIIP, ENES…VDIG, RHRW…PSCP, SREL…LDVD, RIKK…RSKK, ERRR…PSCP, and ERRR…IFPQ. Disordered regions lie at residues 180–203 and 249–295; these read EKVQ…PEDS and WEDA…EGYS. Composition is skewed to acidic residues over residues 259–268 and 279–291; these read NESDDEEEEE and ESEE…ESWD. Positions 559–597 are disordered; the sequence is KGKGKKRRGRRSKKERRRGRKEGEEDQNPPCPRLSRELL. The segment covering 560-578 has biased composition (basic residues); it reads GKGKKRRGRRSKKERRRGR. Residues 803 to 841 form a disordered region; that stretch reads KGKGKKRRGRRSKKERRRGRKEGEEDQNPPCPRLSRELL. The segment covering 804 to 822 has biased composition (basic residues); sequence GKGKKRRGRRSKKERRRGR. Residues 1047–1085 are disordered; sequence KGKGKKRRGRRSKKERRRGRKEGEEDQNPPCPRLSRELL. A compositionally biased stretch (basic residues) spans 1048 to 1066; that stretch reads GKGKKRRGRRSKKERRRGR. The disordered stretch occupies residues 1291 to 1329; the sequence is KGKGKKRRGRRSKKERRRGRKEGEEDQNPPCPRLSRELL. The span at 1292 to 1310 shows a compositional bias: basic residues; sequence GKGKKRRGRRSKKERRRGR. A disordered region spans residues 1535-1573; the sequence is KGKGKKRRGRRSKKERRRGRKEGEEDQNPPCPRLSRELL. Residues 1536–1554 are compositionally biased toward basic residues; it reads GKGKKRRGRRSKKERRRGR. Residues 1779 to 1817 form a disordered region; that stretch reads KGKGKKRRGRRSKKERRRGRKEGEEDQNPPCPRLSRELL. Over residues 1780-1798 the composition is skewed to basic residues; the sequence is GKGKKRRGRRSKKERRRGR. The segment at 2023–2061 is disordered; sequence KGKGKKRRGRRSKKERRRGRKEGEEDQNPPCPRLSRELL. Over residues 2024–2042 the composition is skewed to basic residues; it reads GKGKKRRGRRSKKERRRGR. A disordered region spans residues 2267-2305; it reads KGKGKKRRGRRSKKERRRGRKEGEEDQNPPCPRLSRELL. Basic residues predominate over residues 2268–2286; that stretch reads GKGKKRRGRRSKKERRRGR. Positions 2511–2549 are disordered; the sequence is KGKGKKRRGRRSKKERRRGRKEGEEDQNPPCPRLSRELL. The span at 2512–2530 shows a compositional bias: basic residues; sequence GKGKKRRGRRSKKERRRGR. Residues 2755–2793 form a disordered region; sequence KGKGKKRRGRRSKKERRRGRKEGEEDQNPPCPRLSRELL. Residues 2756-2774 show a composition bias toward basic residues; sequence GKGKKRRGRRSKKERRRGR. Residues 2999-3037 are disordered; the sequence is KGKGKKRRGRRSKKERRRGRKEGEEDQNPPCPRLSRELL. Residues 3000–3018 show a composition bias toward basic residues; that stretch reads GKGKKRRGRRSKKERRRGR. The segment at 3243–3281 is disordered; it reads KGKGKKRRGRRSKKERRRGRKEGEEDQNPPCPRLSRELL. Over residues 3244 to 3262 the composition is skewed to basic residues; that stretch reads GKGKKRRGRRSKKERRRGR. The segment at 3487 to 3525 is disordered; it reads KGKGKKRRGRRSKKERRRGRKEGEEDQNPPCPRLSRELL. The span at 3488–3506 shows a compositional bias: basic residues; sequence GKGKKRRGRRSKKERRRGR. Positions 3731–3764 are disordered; that stretch reads KGKGKKRRGRRSKKERRRGRKEGEEDQNPPCPRL. A compositionally biased stretch (basic residues) spans 3732–3750; sequence GKGKKRRGRRSKKERRRGR.

The protein belongs to the NBPF family.

Its subcellular location is the cytoplasm. The polypeptide is NBPF family member NBPF19 (Homo sapiens (Human)).